A 515-amino-acid polypeptide reads, in one-letter code: Protein disulfide-isomerase (515 aa).

The first 22 residues, 1-22 (MAVVRVRAIVALLCLVAALGLA), serve as a signal peptide directing secretion. Thioredoxin domains are found at residues 23-139 (EPLE…KRTG) and 351-480 (FLEG…SGGQ). Catalysis depends on nucleophile residues Cys-58, Cys-61, Cys-402, and Cys-405. Disulfide bonds link Cys-58–Cys-61 and Cys-402–Cys-405. The tract at residues 477–515 (SGGQDGAAADDDLEDLETDEETDLEEGDDDEQKIQKDEL) is disordered. Residues 484 to 507 (AADDDLEDLETDEETDLEEGDDDE) show a composition bias toward acidic residues. The short motif at 512-515 (KDEL) is the Prevents secretion from ER element.

Belongs to the protein disulfide isomerase family. In terms of assembly, heterodimer; heterodimerizes with the protein microsomal triglyceride transfer MTTP. Homodimer. Monomers and homotetramers may also occur. Also constitutes the structural subunit of prolyl 4-hydroxylase. Stabilizes this enzyme and retains it in the ER without contributing to the catalytic activity. Binds UBQLN1.

The protein resides in the endoplasmic reticulum. It is found in the endoplasmic reticulum lumen. The protein localises to the cell membrane. The catalysed reaction is Catalyzes the rearrangement of -S-S- bonds in proteins.. This multifunctional protein catalyzes the formation, breakage and rearrangement of disulfide bonds. At the cell surface, seems to act as a reductase that cleaves disulfide bonds of proteins attached to the cell. May therefore cause structural modifications of exofacial proteins. Inside the cell, seems to form/rearrange disulfide bonds of nascent proteins. At high concentrations, functions as a chaperone that inhibits aggregation of misfolded proteins. At low concentrations, facilitates aggregation (anti-chaperone activity). Also acts a structural subunit of various enzymes such as prolyl 4-hydroxylase. This Gallus gallus (Chicken) protein is Protein disulfide-isomerase (P4HB).